The primary structure comprises 130 residues: Astrocytic phosphoprotein PEA-15 (130 aa).

One can recognise a DED domain in the interval 3–81 (EYGTLLQDLT…RPDLLTMVVD (79 aa)). 4 positions are modified to phosphoserine: Ser61, Ser90, Ser104, and Ser116. Residues 98–107 (KLTRIPSAKK) are microtubule-binding. Positions 122 to 129 (KLAPPPKK) are microtubule-binding.

As to quaternary structure, binds RPS6KA3, MAPK3 and MAPK1. Transient interaction with PLD1 and PLD2. Interacts with CASP8 and FADD. In terms of processing, phosphorylated by protein kinase C and calcium-calmodulin-dependent protein kinase. These phosphorylation events are modulated by neurotransmitters or hormones. In terms of tissue distribution, ubiquitously expressed. Most abundant in tissues such as heart, brain, muscle and adipose tissue which utilize glucose as an energy source. Lower expression in glucose-producing tissues. Higher levels of expression are found in tissues from individuals with type 2 diabetes than in controls.

The protein localises to the cytoplasm. Functionally, blocks Ras-mediated inhibition of integrin activation and modulates the ERK MAP kinase cascade. Inhibits RPS6KA3 activities by retaining it in the cytoplasm. Inhibits both TNFRSF6- and TNFRSF1A-mediated CASP8 activity and apoptosis. Regulates glucose transport by controlling both the content of SLC2A1 glucose transporters on the plasma membrane and the insulin-dependent trafficking of SLC2A4 from the cell interior to the surface. The sequence is that of Astrocytic phosphoprotein PEA-15 (PEA15) from Homo sapiens (Human).